Here is a 338-residue protein sequence, read N- to C-terminus: MPACYCATSTSLENNELLYKNIRNLFSTSRSFPIEQEWMNLKSISQMKDFFSNFPGNSKANNHFLCNSPLKFEIFNNEKSVKPSNGPHLFTRCSCRCNKLLSGDYITQQQPIDASAEHSLNAKGINTYSLKNCFQRSGFIGSYEESLFSGHMPYCSSVPFEFSIEIGVISFCRCKPSLVFPPHLKINFVAYSLVGNVDNVQFPYIGRFRLRSQKSDKVMNKGYPFGYRIPSVGQLQLILRQTNGLVIKVFLVPYNVSSMVDCSKTWIRQKHYLQQLDDKSGKILSHLKFGLQLQIICTSAGHHYLYDSQRIIFVQQSLGGLYGNTKIVNETLLSESCR.

This is an uncharacterized protein from Schizosaccharomyces pombe (strain 972 / ATCC 24843) (Fission yeast).